Reading from the N-terminus, the 589-residue chain is Aspartate--tRNA(Asp/Asn) ligase (589 aa).

Glutamate 176 lines the L-aspartate pocket. An aspartate region spans residues 200–203 (QLFK). Arginine 222 contacts L-aspartate. ATP is bound by residues 222-224 (RDE) and glutamine 231. Histidine 450 lines the L-aspartate pocket. An ATP-binding site is contributed by glutamate 484. L-aspartate is bound at residue arginine 491. Residue 536–539 (GLDR) coordinates ATP.

Belongs to the class-II aminoacyl-tRNA synthetase family. Type 1 subfamily. As to quaternary structure, homodimer.

It localises to the cytoplasm. It carries out the reaction tRNA(Asx) + L-aspartate + ATP = L-aspartyl-tRNA(Asx) + AMP + diphosphate. Aspartyl-tRNA synthetase with relaxed tRNA specificity since it is able to aspartylate not only its cognate tRNA(Asp) but also tRNA(Asn). Reaction proceeds in two steps: L-aspartate is first activated by ATP to form Asp-AMP and then transferred to the acceptor end of tRNA(Asp/Asn). This Bacillus cytotoxicus (strain DSM 22905 / CIP 110041 / 391-98 / NVH 391-98) protein is Aspartate--tRNA(Asp/Asn) ligase.